The following is a 400-amino-acid chain: Cytohesin-3 (400 aa).

A coiled-coil region spans residues 14 to 61; that stretch reads EDLSLEEREELLDIRRRKKELIDDIERLKYEIAEVMTEIDNLTSVEES. Residues 77–206 enclose the SEC7 domain; sequence FNMDPKKGIQ…IIMLNTSLHN (130 aa). The PH domain maps to 264-381; the sequence is NPDREGWLLK…WMKSIKASIS (118 aa). A 1,2-diacyl-sn-glycero-3-phospho-(1D-myo-inositol-3,4,5-trisphosphate) is bound by residues 273-281, Arg285, Tyr296, Arg306, and Asn355; that span reads KLGGGRVKT. Residues 392–400 are C-terminal autoinhibitory region; it reads RKRRIANKK.

Interacts with TAMALIN. Interacts with ARF6. Interacts with FRMD4A. Interacts with FRMD4B. In terms of tissue distribution, almost absent from liver, thymus and peripheral blood lymphocytes.

It is found in the cytoplasm. The protein localises to the cytosol. It localises to the cell membrane. The protein resides in the cell junction. Its subcellular location is the adherens junction. It is found in the tight junction. Its function is as follows. Promotes guanine-nucleotide exchange on ARF1 and ARF6. Promotes the activation of ARF factors through replacement of GDP with GTP. Plays a role in the epithelial polarization. This Homo sapiens (Human) protein is Cytohesin-3.